The primary structure comprises 1251 residues: Insulin receptor substrate 1 (1251 aa).

Ser-3 is modified (phosphoserine). A mediates interaction with PHIP region spans residues 3–137; sequence SPPESDGFSD…GAGGGGGSCS (135 aa). The region spanning 12–115 is the PH domain; that stretch reads DVRKVGYLRK…WYQALLQLHN (104 aa). Ser-99 carries the phosphoserine; by CK2 modification. An IRS-type PTB domain is found at 160–264; sequence FKEVWQVILK…EAMRAMSDEF (105 aa). The interval 262 to 430 is disordered; that stretch reads DEFRPRSKSQ…SDGGFISSDE (169 aa). Over residues 269 to 281 the composition is skewed to low complexity; the sequence is KSQSSSNCSNPIS. Ser-270 carries the post-translational modification Phosphoserine. Ser-307 carries the phosphoserine; by RPS6KB1 modification. Phosphoserine; by IKKB, MAPK8 and RPS6KB1 is present on Ser-312. 4 positions are modified to phosphoserine: Ser-323, Ser-330, Ser-345, and Ser-348. The segment covering 354–363 has biased composition (basic residues); that stretch reads THAHRHRGSA. 2 stretches are compositionally biased toward low complexity: residues 383 to 404 and 412 to 424; these read SPSA…GSTS and SSAS…SDGG. Ser-419 carries the post-translational modification Phosphoserine. Thr-446 and Thr-453 each carry phosphothreonine. Phosphotyrosine; by INSR is present on Tyr-465. Residues 465–468 carry the YXXM motif 1 motif; that stretch reads YICM. A disordered region spans residues 494 to 513; the sequence is YTPGTGLGTSPALAGDEASS. Ser-527 is modified (phosphoserine; by RPS6KB1). Positions 551-554 match the YXXM motif 2 motif; the sequence is YTEM. Residues 594-610 are compositionally biased toward basic and acidic residues; it reads RRGGHHRPDSSTLHTDD. Positions 594-616 are disordered; that stretch reads RRGGHHRPDSSTLHTDDGYMPMS. A Phosphotyrosine; by INSR modification is found at Tyr-612. Residues 612–615 carry the YXXM motif 3 motif; it reads YMPM. Residue Ser-629 is modified to Phosphoserine. Phosphotyrosine; by INSR is present on Tyr-632. A YXXM motif 4 motif is present at residues 632-635; that stretch reads YMPM. Ser-636 carries the post-translational modification Phosphoserine; by RPS6KB1. Tyr-662 bears the Phosphotyrosine mark. The short motif at 662 to 665 is the YXXM motif 5 element; sequence YMMM. The disordered stretch occupies residues 668 to 692; that stretch reads SGGCSPDIGGGPSSSSSSTVPSGSS. A YXXM motif 6 motif is present at residues 730 to 733; the sequence is YMNM. 2 disordered regions span residues 734–753 and 769–946; these read SPVG…GPED and FKHT…EETG. Residues 774–783 show a composition bias toward basic and acidic residues; that stretch reads RPGEPEEGAR. Ser-792 is subject to Phosphoserine; by AMPK and SIK2. Composition is skewed to low complexity over residues 799-813 and 875-891; these read AATA…SSDS and QQQQ…QQQQ. Phosphoserine is present on Ser-901. Tyr-905 carries the phosphotyrosine; by INSR modification. The tract at residues 905 to 907 is GRB2-binding; it reads YVN. Residues 924–937 show a composition bias toward polar residues; it reads SRSSPSVRCPSQLQ. Tyr-950 and Tyr-998 each carry phosphotyrosine; by INSR. 3 short sequence motifs (YXXM motif) span residues 950–953, 998–1001, and 1021–1024; these read YMKM, YMTM, and YADM. Disordered stretches follow at residues 1091 to 1124 and 1130 to 1149; these read NQSA…RVGN and AGAA…DVKR. Phosphoserine is present on residues Ser-1109 and Ser-1110. Residues 1111-1123 are compositionally biased toward polar residues; the sequence is ETFSSTPSATRVG. Phosphotyrosine; by INSR is present on Tyr-1188. Lys-1195 is covalently cross-linked (Glycyl lysine isopeptide (Lys-Gly) (interchain with G-Cter in ubiquitin)). Residues 1195 to 1251 form a disordered region; it reads KDFKQRPQECTPQPQPPPPPPPHQPLGSSESSSTRRSSEDLSAYASISFQKQPEDLQ. The span at 1207–1218 shows a compositional bias: pro residues; sequence QPQPPPPPPPHQ. Phosphotyrosine; by INSR is present on Tyr-1238.

Interacts with UBTF and PIK3CA. Interacts (via phosphorylated YXXM motifs) with PIK3R1. Interacts with ROCK1 and FER. Interacts (via PH domain) with PHIP. Interacts with GRB2. Interacts with SOCS7. Interacts (via IRS-type PTB domain) with IGF1R and INSR (via the tyrosine-phosphorylated NPXY motif). Interacts with ALK. Interacts with EIF2AK2/PKR. Interacts with GKAP1. Interacts with DGKZ in the absence of insulin; insulin stimulation decreases this interaction. Found in a ternary complex with DGKZ and PIP5K1A in the absence of insulin stimulation. Interacts with SQSTM1; the interaction is disrupted by the presence of tensin TNS2. Interacts with NCK1 (via SH2 domain). Interacts with NCK2 (via SH3 domain). Interacts with SH2B1; this interaction enhances leptin-induced activation of the PI3-kinase pathway. Interacts with DVL2; this interaction promotes the Wnt/beta-catenin signaling pathway. Interacts with JAK1. Post-translationally, serine phosphorylation of IRS1 is a mechanism for insulin resistance. Ser-312 phosphorylation inhibits insulin action through disruption of IRS1 interaction with the insulin receptor. Phosphorylation of Tyr-905 is required for GRB2-binding. Phosphorylated by ALK. Phosphorylated at Ser-270, Ser-307, Ser-636 and Ser-1109 by RPS6KB1; phosphorylation induces accelerated degradation of IRS1. Phosphorylated on tyrosine residues in response to insulin. In skeletal muscles, dephosphorylated on Tyr-612 by TNS2 under anabolic conditions; dephosphorylation results in the proteasomal degradation of IRS1. Ubiquitinated by the Cul7-RING(FBXW8) complex in a mTOR-dependent manner, leading to its degradation: the Cul7-RING(FBXW8) complex recognizes and binds IRS1 previously phosphorylated by S6 kinase (RPS6KB1 or RPS6KB2). Ubiquitinated by TRAF4 through 'Lys-29' linkage; this ubiquitination regulates the interaction of IRS1 with IGFR and IRS1 tyrosine phosphorylation upon IGF1 stimulation. In terms of processing, S-nitrosylation at by BLVRB inhibits its activity.

Its subcellular location is the cytoplasm. The protein resides in the nucleus. In terms of biological role, signaling adapter protein that participates in the signal transduction from two prominent receptor tyrosine kinases, insulin receptor/INSR and insulin-like growth factor I receptor/IGF1R. Plays therefore an important role in development, growth, glucose homeostasis as well as lipid metabolism. Upon phosphorylation by the insulin receptor, functions as a signaling scaffold that propagates insulin action through binding to SH2 domain-containing proteins including the p85 regulatory subunit of PI3K, NCK1, NCK2, GRB2 or SHP2. Recruitment of GRB2 leads to the activation of the guanine nucleotide exchange factor SOS1 which in turn triggers the Ras/Raf/MEK/MAPK signaling cascade. Activation of the PI3K/AKT pathway is responsible for most of insulin metabolic effects in the cell, and the Ras/Raf/MEK/MAPK is involved in the regulation of gene expression and in cooperation with the PI3K pathway regulates cell growth and differentiation. Acts a positive regulator of the Wnt/beta-catenin signaling pathway through suppression of DVL2 autophagy-mediated degradation leading to cell proliferation. In Chlorocebus aethiops (Green monkey), this protein is Insulin receptor substrate 1 (IRS1).